We begin with the raw amino-acid sequence, 176 residues long: Neuropeptide-like protein 1 (176 aa).

A signal peptide spans 1 to 19 (MKATFVLACLLVIAAVSHA). A disordered region spans residues 59-79 (GKRSAEQNEQANKEDKATSDK). Over residues 61–79 (RSAEQNEQANKEDKATSDK) the composition is skewed to basic and acidic residues.

Its function is as follows. In AWC olfactory sensory neurons, required for the detection of preferred food sources. The protein is Neuropeptide-like protein 1 (nlp-1) of Caenorhabditis elegans.